The sequence spans 140 residues: Protein NrdI (140 aa).

Belongs to the NrdI family.

In terms of biological role, probably involved in ribonucleotide reductase function. The sequence is that of Protein NrdI from Ruegeria sp. (strain TM1040) (Silicibacter sp.).